The following is a 138-amino-acid chain: Basic phospholipase A2 homolog promutoxin (138 aa).

A signal peptide spans 1 to 16 (MRTLWIMAVLLLGVEG). 7 cysteine pairs are disulfide-bonded: Cys42-Cys132, Cys44-Cys60, Cys59-Cys112, Cys65-Cys138, Cys66-Cys105, Cys73-Cys98, and Cys91-Cys103. The tract at residues 122–133 (KKHRVTMKFLCK) is important for membrane-damaging activities in eukaryotes and bacteria; heparin-binding.

The protein belongs to the phospholipase A2 family. Group II subfamily. R49 sub-subfamily. Homodimer; non-covalently linked. Expressed by the venom gland.

The protein resides in the secreted. Functionally, snake venom phospholipase A2 homolog that lacks enzymatic activity. Exhibits potent myotoxicity causing myonecrosis and edema in the gastrocnemius muscle of mice. Is also able to stimulate the release of IL12 (IL12A-IL12B), TNF-alpha (TNF), IL6 and IL1-beta (IL1B) from human monocytes, and induce IL2, TNFalpha and IL6 release from T-cells. A model of myotoxic mechanism has been proposed: an apo Lys49-PLA2 is activated by the entrance of a hydrophobic molecule (e.g. fatty acid) at the hydrophobic channel of the protein leading to a reorientation of a monomer. This reorientation causes a transition between 'inactive' to 'active' states, causing alignment of C-terminal and membrane-docking sites (MDoS) side-by-side and putting the membrane-disruption sites (MDiS) in the same plane, exposed to solvent and in a symmetric position for both monomers. The MDoS region stabilizes the toxin on membrane by the interaction of charged residues with phospholipid head groups. Subsequently, the MDiS region destabilizes the membrane with penetration of hydrophobic residues. This insertion causes a disorganization of the membrane, allowing an uncontrolled influx of ions (i.e. calcium and sodium), and eventually triggering irreversible intracellular alterations and cell death. This chain is Basic phospholipase A2 homolog promutoxin, found in Protobothrops mucrosquamatus (Taiwan habu).